Here is a 666-residue protein sequence, read N- to C-terminus: UvrABC system protein B (666 aa).

One can recognise a Helicase ATP-binding domain in the interval 25–412; the sequence is EQVQAGAPYQ…EEQIVEQVIR (388 aa). 38 to 45 contacts ATP; the sequence is GATGTGKT. A Beta-hairpin motif is present at residues 91–114; that stretch reads YYDYYQPEAYIPVTDTYIAKTASI. The Helicase C-terminal domain occupies 429–595; sequence QVDDLLAEIQ…PIIKRSSNAI (167 aa). The UVR domain occupies 626–661; sequence PNLITQLEAQMKEAAKNLEFEEAAQYRDRIKKLRER.

The protein belongs to the UvrB family. In terms of assembly, forms a heterotetramer with UvrA during the search for lesions. Interacts with UvrC in an incision complex.

Its subcellular location is the cytoplasm. Its function is as follows. The UvrABC repair system catalyzes the recognition and processing of DNA lesions. A damage recognition complex composed of 2 UvrA and 2 UvrB subunits scans DNA for abnormalities. Upon binding of the UvrA(2)B(2) complex to a putative damaged site, the DNA wraps around one UvrB monomer. DNA wrap is dependent on ATP binding by UvrB and probably causes local melting of the DNA helix, facilitating insertion of UvrB beta-hairpin between the DNA strands. Then UvrB probes one DNA strand for the presence of a lesion. If a lesion is found the UvrA subunits dissociate and the UvrB-DNA preincision complex is formed. This complex is subsequently bound by UvrC and the second UvrB is released. If no lesion is found, the DNA wraps around the other UvrB subunit that will check the other stand for damage. This Synechococcus sp. (strain ATCC 27144 / PCC 6301 / SAUG 1402/1) (Anacystis nidulans) protein is UvrABC system protein B.